Here is a 1211-residue protein sequence, read N- to C-terminus: Diacylglycerol kinase eta (1211 aa).

A disordered region spans residues 1–66; sequence MAGAGSQHHP…QMRTKTSIKE (66 aa). Residues 19–32 are compositionally biased toward low complexity; the sequence is AGASAVSPTAAGPG. Over residues 52–61 the composition is skewed to polar residues; the sequence is VSTSGQMRTK. The PH domain occupies 62 to 155; the sequence is TSIKEGQLLK…WISSLKSVQS (94 aa). Phorbol-ester/DAG-type zinc fingers lie at residues 172-222 and 244-295; these read MHNW…TNNC and PHQW…HPVC. The region spanning 325–460 is the DAGKc domain; the sequence is FCVSPLLVFV…LDRWSIMTYE (136 aa). Disordered stretches follow at residues 562–613 and 634–694; these read SQAS…KPRE and KVMD…SVAG. 2 stretches are compositionally biased toward acidic residues: residues 576 to 589 and 653 to 662; these read PEED…DESL and YDTETDEAKE. Residues 670–691 show a composition bias toward polar residues; it reads SAKTTSQSPDAQASCGHPQTDS. Residues 1143-1206 form the SAM domain; it reads WGTEEVAAWL…LQGIKELERN (64 aa).

It belongs to the eukaryotic diacylglycerol kinase family. In terms of assembly, interacts with RAF1 and BRAF. As to quaternary structure, homooligomers. Heterooligomers. Oligomerization through the SAM domain inhibits the diacylglycerol kinase activity. Heterooligomerizes with SAM domain-containing isoforms of DGKD. Does not form homooligomers. In terms of processing, phosphorylated. Phosphorylation does not inhibit catalytic activity. As to expression, widely expressed. Detected in the granulosa cells of the primary and secondary follicles. Expressed in mature follicles and corpus lutea. Expressed in the oviductal epithelium. In the uterus, strongly expressed in the luminal epithelium. Detected in the uterine glands. In terms of tissue distribution, detected in ovary and uterus (at protein level). Specifically expressed in testis. Detected in the inner area of the testis. Strongly expressed in the secondary spermatocytes and the round spermatids and weakly detected in the primary spermatocytes.

The protein localises to the cytoplasm. Its subcellular location is the cell membrane. The protein resides in the cytoskeleton. It carries out the reaction a 1,2-diacyl-sn-glycerol + ATP = a 1,2-diacyl-sn-glycero-3-phosphate + ADP + H(+). It catalyses the reaction 1,2-di-(9Z-octadecenoyl)-sn-glycerol + ATP = 1,2-di-(9Z-octadecenoyl)-sn-glycero-3-phosphate + ADP + H(+). Its pathway is lipid metabolism; glycerolipid metabolism. Its function is as follows. Diacylglycerol kinase that converts diacylglycerol/DAG into phosphatidic acid/phosphatidate/PA and regulates the respective levels of these two bioactive lipids. Thereby, acts as a central switch between the signaling pathways activated by these second messengers with different cellular targets and opposite effects in numerous biological processes. Plays a key role in promoting cell growth. Activates the Ras/B-Raf/C-Raf/MEK/ERK signaling pathway induced by EGF. Regulates the recruitment of RAF1 and BRAF from cytoplasm to membranes and their heterodimerization. The chain is Diacylglycerol kinase eta from Mus musculus (Mouse).